Here is a 66-residue protein sequence, read N- to C-terminus: DNA-directed RNA polymerase subunit omega (66 aa).

Belongs to the RNA polymerase subunit omega family. As to quaternary structure, the RNAP catalytic core consists of 2 alpha, 1 beta, 1 beta' and 1 omega subunit. When a sigma factor is associated with the core the holoenzyme is formed, which can initiate transcription.

It carries out the reaction RNA(n) + a ribonucleoside 5'-triphosphate = RNA(n+1) + diphosphate. Its function is as follows. Promotes RNA polymerase assembly. Latches the N- and C-terminal regions of the beta' subunit thereby facilitating its interaction with the beta and alpha subunits. This is DNA-directed RNA polymerase subunit omega from Geobacillus kaustophilus (strain HTA426).